The sequence spans 275 residues: Galaxin-2 (275 aa).

An N-terminal signal peptide occupies residues 1–20 (MTRFTSIGLCAVLLFNVCSC).

As to expression, component of the acid-insoluble and acid-soluble organic matrix of the aragonitic skeleton (at protein level).

The protein localises to the secreted. This chain is Galaxin-2, found in Acropora millepora (Staghorn coral).